Reading from the N-terminus, the 89-residue chain is UPF0367 protein CYB_2632 (89 aa).

Positions 69-89 are disordered; the sequence is SKSGSASPMGTRPGFLAQLQS.

This sequence belongs to the UPF0367 family.

This Synechococcus sp. (strain JA-2-3B'a(2-13)) (Cyanobacteria bacterium Yellowstone B-Prime) protein is UPF0367 protein CYB_2632.